Reading from the N-terminus, the 199-residue chain is Ribonuclease HII (199 aa).

Residues 12–199 form the RNase H type-2 domain; it reads DLLAGTDEAG…FGPVKKILEG (188 aa). Residues aspartate 18, glutamate 19, and aspartate 110 each coordinate a divalent metal cation.

The protein belongs to the RNase HII family. It depends on Mn(2+) as a cofactor. The cofactor is Mg(2+).

The protein localises to the cytoplasm. It catalyses the reaction Endonucleolytic cleavage to 5'-phosphomonoester.. Functionally, endonuclease that specifically degrades the RNA of RNA-DNA hybrids. This chain is Ribonuclease HII, found in Marinomonas sp. (strain MWYL1).